Here is a 503-residue protein sequence, read N- to C-terminus: AMP phosphorylase (503 aa).

AMP is bound by residues Gly-168, 194–199, and Ser-203; that span reads SRAITG. Catalysis depends on Asp-256, which acts as the Proton donor. 2 residues coordinate AMP: Ser-264 and Lys-288.

The protein belongs to the thymidine/pyrimidine-nucleoside phosphorylase family. Type 2 subfamily.

It catalyses the reaction AMP + phosphate = alpha-D-ribose 1,5-bisphosphate + adenine. It carries out the reaction CMP + phosphate = cytosine + alpha-D-ribose 1,5-bisphosphate. The catalysed reaction is UMP + phosphate = alpha-D-ribose 1,5-bisphosphate + uracil. Functionally, catalyzes the conversion of AMP and phosphate to adenine and ribose 1,5-bisphosphate (R15P). Exhibits phosphorylase activity toward CMP and UMP in addition to AMP. Functions in an archaeal AMP degradation pathway, together with R15P isomerase and RubisCO. This is AMP phosphorylase from Methanocella arvoryzae (strain DSM 22066 / NBRC 105507 / MRE50).